The primary structure comprises 527 residues: Fusicoccadiene C-8 hydroxylase (527 aa).

A helical transmembrane segment spans residues 15–35 (GKPLLLFLILITLTYSLGIVF). Asparagine 125 carries an N-linked (GlcNAc...) asparagine glycan. A heme-binding site is contributed by cysteine 465. A glycan (N-linked (GlcNAc...) asparagine) is linked at asparagine 496.

This sequence belongs to the cytochrome P450 family. Requires heme as cofactor.

It is found in the membrane. The protein operates within mycotoxin biosynthesis. In terms of biological role, cytochrome P450 monooxygenase; part of the gene cluster that mediates the biosynthesis of the diterpene glucoside brassicicene C. In the first step of the brassicicene C biosynthesis, the bifunctional diterpene synthase bsc8 that possesses both prenyl transferase and terpene cyclase activity, converts isopentenyl diphosphate and dimethylallyl diphosphate into geranylgeranyl diphosphate (GGDP) that is further converted into fusicocca-2,10(14)-diene, the first precursor for brassicicene C. Fusicocca-2,10(14)-diene is then substrate of cytochrome P450 monooxygenase bsc1 for hydroxylation at the C-8 position. Oxidation at C-16 position to aldehyde is then catalyzed by the cytochrome P450 monooyxygenase bsc7, yielding fusicocca-2,10(14)-diene-8-beta,16-diol. Follows the isomerization of the double bond and reduction of aldehyde to alcohol catalyzed by the short-chain dehydrogenase/reductase bsc3 to yield the diol compound fusicocca-1,10(14)-diene-8 beta,16-diol. The next step is the oxidation at the C-3 position of fusicocca-2,10(14)-diene-8-beta,16-diol catalyzed by the alpha-ketoglutarate dependent dioxygenase bsc9, to produce a triol compound. Methylation of the hydroxy group at position 16 is performed by the methyltransferase bsc6. 16-O-methylation is followed by oxidation at the C-13 position to ketone and an alkyl shift of the methyl group leads to brassicicene C. Although the probable acetyltransferase bsc4 is included in the gene cluster, no acetylation reactions are necessary for brassicicene C biosynthesis. However, the fact that brassicicene E, which is a structurally related compound having an acetoxy group at position 12, was previously isolated from another strain of A.brassicicola suggests that the ATCC 96836 strain might also produce a small amount of brassicicene E. This is Fusicoccadiene C-8 hydroxylase from Alternaria brassicicola (Dark leaf spot agent).